Reading from the N-terminus, the 598-residue chain is Leucine aminopeptidase 2, chloroplastic (598 aa).

Residues Met1 to Ala71 constitute a chloroplast transit peptide. Mn(2+)-binding residues include Lys367 and Asp372. Lys379 is a catalytic residue. Mn(2+) is bound by residues Asp392, Asp452, and Glu454. The active site involves Arg456.

It belongs to the peptidase M17 family. As to quaternary structure, homohexamer (dimer of homotrimers). Requires Mn(2+) as cofactor.

Its subcellular location is the plastid. It localises to the chloroplast. The catalysed reaction is Release of an N-terminal amino acid, Xaa-|-Yaa-, in which Xaa is preferably Leu, but may be other amino acids including Pro although not Arg or Lys, and Yaa may be Pro. Amino acid amides and methyl esters are also readily hydrolyzed, but rates on arylamides are exceedingly low.. It carries out the reaction Release of N-terminal proline from a peptide.. Functionally, presumably involved in the processing and regular turnover of intracellular proteins. Catalyzes the removal of unsubstituted N-terminal amino acids from various peptides. The sequence is that of Leucine aminopeptidase 2, chloroplastic from Oryza sativa subsp. japonica (Rice).